A 402-amino-acid chain; its full sequence is MIDPAYRKKMVVVEGSYAVAHSAKVCRPNVISAYPITPQTHIVEHLSQFMADGEIPNCEYVNVEAEFSAISALIGASAVGARTYSATTSQGLLLMHEALFNTSGMRLPVVMTVANRAVSAPINIWNDHQDAIAQRDTGWMQLYVEDVQEACDTLPQLYKIAEDNEIMVPGMVCMDGFILSHVYEPVVLLEQDLTDNFLPPFQPEDILDPEDPKTFGAFASPDTYEEFRYLHEQAMQKALPKIEATAKEFEEVYGRYHGGLIDGYMLDDAEIVVMAMGSILGTVKDVVDKYRAKGEKIGVLKVRSFRPFPKEQICKAVKNAHAVVVLDKNISIGTNEGALFTETKSCLYNSKVRVPVIGYTIGHGGRDIPVESIAKVIEETKKVAKSGITIESQFMDLKEELL.

Heterotetramer of one alpha, one beta, one delta and one gamma chain.

The enzyme catalyses 2 oxidized [2Fe-2S]-[ferredoxin] + pyruvate + CoA = 2 reduced [2Fe-2S]-[ferredoxin] + acetyl-CoA + CO2 + H(+). In Methanosarcina barkeri (strain Fusaro / DSM 804), this protein is Pyruvate synthase subunit PorA (porA).